Consider the following 416-residue polypeptide: Calreticulin (416 aa).

N54 is a glycosylation site (N-linked (GlcNAc...) asparagine). An intrachain disulfide couples C108 to C140. Residues Y112, K114, Y131, and D138 each coordinate an alpha-D-glucoside. A run of 7 repeats spans residues 194-205, 213-224, 230-241, 248-259, 263-273, 277-287, and 291-301. The tract at residues 194 to 259 is 4 X approximate repeats; sequence KQSGSVYTDW…EAKKPEDWDD (66 aa). Residues 209-281 form a disordered region; the sequence is KQIKDPEAKK…NPDYKGEWKP (73 aa). Basic and acidic residues predominate over residues 210–255; it reads QIKDPEAKKPEDWEDKEYIPDPEDKKPEGYDDIPKEITDPEAKKPE. Residues 263-301 are 3 X approximate repeats; sequence GEWTAPTIPNPDYKGEWKPKKIKNPNFKGKWKAPMIDNP. An an alpha-D-glucoside-binding site is contributed by E321. The segment covering 349–378 has biased composition (basic and acidic residues); it reads ETWGKNKDAEKAAFDEAEKKKEEEEAKDDP. The interval 349 to 416 is disordered; that stretch reads ETWGKNKDAE…EDDEDVHDEL (68 aa). A compositionally biased stretch (acidic residues) spans 379-416; it reads TESDDEKPDEEGESDGEGDDESKDIDNEEDDEDVHDEL. The Prevents secretion from ER signature appears at 413 to 416; sequence HDEL.

This sequence belongs to the calreticulin family.

The protein resides in the endoplasmic reticulum lumen. Molecular calcium-binding chaperone promoting folding, oligomeric assembly and quality control in the ER via the calreticulin/calnexin cycle. This lectin may interact transiently with almost all of the monoglucosylated glycoproteins that are synthesized in the ER. The polypeptide is Calreticulin (Berberis stolonifera (Barberry)).